The chain runs to 316 residues: MKSENQIHTALYLAFQRSQWAELRESVPLTLNEPELANLRGINEKLSLTEVTDIYLPLSRLLNLIVGAKQKRGLVLNEFLGRKPPKRPYIISIAGSVAVGKSTTARILQALLSQWPEHPRVDLVTTDGFLYPLAELKRRGLLQRKGFPESYDMKLLVEFISNIKAGAPYVEAPLYSHVSYDRITDDHQAIESPDILIIEGLNVLQTSQDAAVGTQQPFVSDFVDFSIYVDAQEQLLKKWYIDRFLQFRGGAFSDENSYFHHYSKLNDKEAKITAANIWDSINGPNLKLNIEPTRDRAHLILQKGDDHLMSQVLLRK.

Glycine 95–serine 102 is a binding site for ATP.

The protein belongs to the prokaryotic pantothenate kinase family.

It localises to the cytoplasm. It carries out the reaction (R)-pantothenate + ATP = (R)-4'-phosphopantothenate + ADP + H(+). It participates in cofactor biosynthesis; coenzyme A biosynthesis; CoA from (R)-pantothenate: step 1/5. The chain is Pantothenate kinase from Shewanella woodyi (strain ATCC 51908 / MS32).